The primary structure comprises 193 residues: Leucyl/phenylalanyl-tRNA--protein transferase (193 aa).

The protein belongs to the L/F-transferase family.

It is found in the cytoplasm. It catalyses the reaction N-terminal L-lysyl-[protein] + L-leucyl-tRNA(Leu) = N-terminal L-leucyl-L-lysyl-[protein] + tRNA(Leu) + H(+). The enzyme catalyses N-terminal L-arginyl-[protein] + L-leucyl-tRNA(Leu) = N-terminal L-leucyl-L-arginyl-[protein] + tRNA(Leu) + H(+). It carries out the reaction L-phenylalanyl-tRNA(Phe) + an N-terminal L-alpha-aminoacyl-[protein] = an N-terminal L-phenylalanyl-L-alpha-aminoacyl-[protein] + tRNA(Phe). In terms of biological role, functions in the N-end rule pathway of protein degradation where it conjugates Leu, Phe and, less efficiently, Met from aminoacyl-tRNAs to the N-termini of proteins containing an N-terminal arginine or lysine. The protein is Leucyl/phenylalanyl-tRNA--protein transferase of Gloeobacter violaceus (strain ATCC 29082 / PCC 7421).